The following is a 129-amino-acid chain: Small ribosomal subunit protein uS11 (129 aa).

This sequence belongs to the universal ribosomal protein uS11 family. Part of the 30S ribosomal subunit. Interacts with proteins S7 and S18. Binds to IF-3.

In terms of biological role, located on the platform of the 30S subunit, it bridges several disparate RNA helices of the 16S rRNA. Forms part of the Shine-Dalgarno cleft in the 70S ribosome. The sequence is that of Small ribosomal subunit protein uS11 from Anoxybacillus flavithermus (strain DSM 21510 / WK1).